We begin with the raw amino-acid sequence, 366 residues long: Putative RING-H2 finger protein ATL21C (366 aa).

Residues 1–23 (MTFSKQLFPFVFFLLFLVSLRHA) form the signal peptide. The helical transmembrane segment at 243-263 (LVLVISLSAVTVFVFPTCIAI) threads the bilayer. An RING-type; atypical zinc finger spans residues 320-362 (CPICLSEYASKETVRFIPECDHCFHVECIDVWLKIHGSCPLCR).

Belongs to the RING-type zinc finger family. ATL subfamily.

The protein resides in the membrane. It catalyses the reaction S-ubiquitinyl-[E2 ubiquitin-conjugating enzyme]-L-cysteine + [acceptor protein]-L-lysine = [E2 ubiquitin-conjugating enzyme]-L-cysteine + N(6)-ubiquitinyl-[acceptor protein]-L-lysine.. The protein operates within protein modification; protein ubiquitination. This Arabidopsis thaliana (Mouse-ear cress) protein is Putative RING-H2 finger protein ATL21C (ATL21C).